The primary structure comprises 109 residues: Flagellar hook-basal body complex protein FliE (109 aa).

Positions 1 to 38 are disordered; that stretch reads MQAIHNDKSLLSPFSELNTDNRTKREESGNAFKEQKGG. Residues 19–38 show a composition bias toward basic and acidic residues; it reads TDNRTKREESGNAFKEQKGG.

This sequence belongs to the FliE family.

It is found in the bacterial flagellum basal body. The chain is Flagellar hook-basal body complex protein FliE from Helicobacter pylori (strain G27).